The sequence spans 204 residues: Ribosomal RNA small subunit methyltransferase G (204 aa).

S-adenosyl-L-methionine is bound by residues G74, L79, 125 to 126 (AY), and R138.

It belongs to the methyltransferase superfamily. RNA methyltransferase RsmG family.

It is found in the cytoplasm. Specifically methylates the N7 position of a guanine in 16S rRNA. In Brachyspira hyodysenteriae (strain ATCC 49526 / WA1), this protein is Ribosomal RNA small subunit methyltransferase G.